Here is a 131-residue protein sequence, read N- to C-terminus: Large ribosomal subunit protein bL19 (131 aa).

The protein belongs to the bacterial ribosomal protein bL19 family.

This protein is located at the 30S-50S ribosomal subunit interface and may play a role in the structure and function of the aminoacyl-tRNA binding site. This Afipia carboxidovorans (strain ATCC 49405 / DSM 1227 / KCTC 32145 / OM5) (Oligotropha carboxidovorans) protein is Large ribosomal subunit protein bL19.